The sequence spans 332 residues: Malate dehydrogenase, cytoplasmic (332 aa).

NAD(+) is bound by residues Q16–I17, D43, and G90. Residue R99 coordinates oxaloacetate. 2 residues coordinate NAD(+): Q113 and N132. Residues N132, R163, H188, and S243 each contribute to the oxaloacetate site. H188 serves as the catalytic Proton acceptor.

This sequence belongs to the LDH/MDH superfamily. MDH type 2 family. As to quaternary structure, monomer. Expressed constitutively in roots.

Its subcellular location is the cell membrane. It carries out the reaction (S)-malate + NAD(+) = oxaloacetate + NADH + H(+). Malate dehydrogenase; catalyzes a reversible NAD-dependent dehydrogenase reaction involved in central metabolism and redox homeostasis. The protein is Malate dehydrogenase, cytoplasmic of Zea mays (Maize).